A 447-amino-acid polypeptide reads, in one-letter code: MARLFGTDGVRGIANYDLTPQLAFELGRAGAYVLTHGTHRPKVVVGKDSRISGDMLECALTAGLTSVGAEVISVGIIPTPAVAYLTRLYQADAGVMISASHNPVEYNGIKFFDKDGYKLPDEVEDRIENIIKEKIELPSPIGTGIGTRKEYTNSHRDYIEFLKSTIDGDLKEMKIVIDCAYGASSTIAPILFKELGAEVILHGAEPIGEKINVNCGSTHPEKLQQLVIENGADIGLAFDGDADRLIAVDEKGNVVDGDHIMAICAIDLKKKGRLKNNTVVATVMSNIGFEIALKEQGINLIRTKVGDRYVLEEMTKGGYSIGGEQSGHIIFLDDNTTGDGEITALKLCSISKESGKKLSELAACMITYPQVLINAKVKNELKNAYLEDEEIKREIENLEREMRGEGRVLIRPSGTEPLVRVMVEGKDYDKISQMAKELAELIERKLN.

The active-site Phosphoserine intermediate is the serine 100. Mg(2+)-binding residues include serine 100, aspartate 239, aspartate 241, and aspartate 243. Serine 100 is modified (phosphoserine).

It belongs to the phosphohexose mutase family. It depends on Mg(2+) as a cofactor. In terms of processing, activated by phosphorylation.

It carries out the reaction alpha-D-glucosamine 1-phosphate = D-glucosamine 6-phosphate. Its function is as follows. Catalyzes the conversion of glucosamine-6-phosphate to glucosamine-1-phosphate. The sequence is that of Phosphoglucosamine mutase from Thermoanaerobacter pseudethanolicus (strain ATCC 33223 / 39E) (Clostridium thermohydrosulfuricum).